Consider the following 370-residue polypeptide: F-box protein At1g66490 (370 aa).

One can recognise an F-box domain in the interval 1–46; sequence MRTISDLPVALVEEILSRVPLTSLSAVRSTCKTWNALSKTQIFGKT.

The chain is F-box protein At1g66490 from Arabidopsis thaliana (Mouse-ear cress).